The primary structure comprises 181 residues: Adenylate kinase (181 aa).

10–15 (GAGKGT) contributes to the ATP binding site. The tract at residues 30–59 (STGDLFRANIGEGTPLGIEAKQYIDAGKLV) is NMP. AMP contacts are provided by residues threonine 31, arginine 36, 57–59 (KLV), 85–88 (GFPR), and glutamine 92. An LID region spans residues 126 to 132 (SRGRADD). Arginine 127 provides a ligand contact to ATP. Residues arginine 129 and arginine 140 each coordinate AMP. ATP is bound at residue glycine 166.

This sequence belongs to the adenylate kinase family. As to quaternary structure, monomer.

The protein resides in the cytoplasm. It catalyses the reaction AMP + ATP = 2 ADP. It participates in purine metabolism; AMP biosynthesis via salvage pathway; AMP from ADP: step 1/1. Its function is as follows. Catalyzes the reversible transfer of the terminal phosphate group between ATP and AMP. Plays an important role in cellular energy homeostasis and in adenine nucleotide metabolism. This is Adenylate kinase from Corynebacterium glutamicum (strain R).